The following is a 569-amino-acid chain: Proline--tRNA ligase (569 aa).

It belongs to the class-II aminoacyl-tRNA synthetase family. ProS type 1 subfamily. In terms of assembly, homodimer.

It is found in the cytoplasm. It catalyses the reaction tRNA(Pro) + L-proline + ATP = L-prolyl-tRNA(Pro) + AMP + diphosphate. In terms of biological role, catalyzes the attachment of proline to tRNA(Pro) in a two-step reaction: proline is first activated by ATP to form Pro-AMP and then transferred to the acceptor end of tRNA(Pro). As ProRS can inadvertently accommodate and process non-cognate amino acids such as alanine and cysteine, to avoid such errors it has two additional distinct editing activities against alanine. One activity is designated as 'pretransfer' editing and involves the tRNA(Pro)-independent hydrolysis of activated Ala-AMP. The other activity is designated 'posttransfer' editing and involves deacylation of mischarged Ala-tRNA(Pro). The misacylated Cys-tRNA(Pro) is not edited by ProRS. This chain is Proline--tRNA ligase, found in Legionella pneumophila (strain Corby).